A 285-amino-acid polypeptide reads, in one-letter code: MKKTLIALAIAASAASGMAHAWMTGDFNGSVDIGGSITADDYRQKWEWKVGTGLNGFGNVLNDLTNGGTKLTITVTGNKPILLGRTKEAFATPVTSGVDGIPHIAFTDYEGASVELRNPDGETEKGLAYFVLPMKNAEGTKVGSVKVNASYAGALGRGGVTSADGELMSLFAEGSHAIFYGGLPTNVKNSELKGGSAAAARTELFGSLSKNDILGQIQRVNANITSLVNVPGSFNENMAYTDGSVVSVAYALGIANGQTIEATFNQAVTTSTQWSAPLNVAITYY.

The first 21 residues, Met1–Ala21, serve as a signal peptide directing secretion.

Belongs to the fimbrial K88 protein family. In terms of assembly, K88 fimbria, 0.1-1 micrometer in length and 7 nanometers in diameter, is composed of about 100 identical subunits.

It localises to the fimbrium. Functionally, K88 major fimbrial subunit. Fimbriae (also called pili), are polar filaments radiating from the surface of the bacterium to a length of 0.5-1.5 micrometers and numbering 100-300 per cell. They enable bacteria to colonize the epithelium of specific host organs. In Escherichia coli, this protein is K88 fimbrial protein AD (faeG).